A 23-amino-acid chain; its full sequence is RDFTHTIIDNSDLFSESRNTRLG.

The protein localises to the secreted. It localises to the nematocyst. Functionally, nephrotoxin. When injected intravenously in rats, causes severe destructive glomerular changes. At 24 hours post-injection partial disruption of the glomerular basement membrane, massive thrombus formation in glomerular capillaries, severe mesangiolysis and infiltrating cells were observed in the majority of glomeruli. This chain is Nephrotoxin PsTX-115, found in Phyllodiscus semoni (Night anemone).